Reading from the N-terminus, the 220-residue chain is Casparian strip membrane protein 4 (220 aa).

Positions 1–39 (MDSRREVEESSTAPILESKRTRSNGKGKSIDGDHSPPHA) are disordered. Topologically, residues 1–60 (MDSRREVEESSTAPILESKRTRSNGKGKSIDGDHSPPHAATVVTTKATPLQKGGMKKGIA) are cytoplasmic. Residues 61 to 81 (ILDFILRLGAIGAALGAAVIM) form a helical membrane-spanning segment. Residues 82 to 108 (GTNEQILPFFTQFLQFHAQWDDFPMFK) are Extracellular-facing. A helical membrane pass occupies residues 109–129 (FFVVANGAAAGFLILSLPFSI). Topologically, residues 130 to 141 (VCIVRPLAAGPR) are cytoplasmic. Residues 142 to 162 (FLLVIVDLVLMALVVAAASSA) traverse the membrane as a helical segment. The Extracellular portion of the chain corresponds to 163 to 194 (AAVVYLAHNGSQDANWNAICQQFTDFCQGSSL). Residue Asn-171 is glycosylated (N-linked (GlcNAc...) asparagine). Residues 195 to 215 (AVVASFVASVFLACLVVVSSV) form a helical membrane-spanning segment. Over 216-220 (ALKRT) the chain is Cytoplasmic.

This sequence belongs to the Casparian strip membrane proteins (CASP) family. Homodimer and heterodimers.

Its subcellular location is the cell membrane. Functionally, regulates membrane-cell wall junctions and localized cell wall deposition. Required for establishment of the Casparian strip membrane domain (CSD) and the subsequent formation of Casparian strips, a cell wall modification of the root endodermis that determines an apoplastic barrier between the intraorganismal apoplasm and the extraorganismal apoplasm and prevents lateral diffusion. This is Casparian strip membrane protein 4 from Medicago truncatula (Barrel medic).